Consider the following 52-residue polypeptide: Large ribosomal subunit protein eL40 (52 aa).

The protein belongs to the eukaryotic ribosomal protein eL40 family.

The protein is Large ribosomal subunit protein eL40 of Thermococcus onnurineus (strain NA1).